An 89-amino-acid polypeptide reads, in one-letter code: Small ribosomal subunit protein uS15 (89 aa).

The protein belongs to the universal ribosomal protein uS15 family. In terms of assembly, part of the 30S ribosomal subunit. Forms a bridge to the 50S subunit in the 70S ribosome, contacting the 23S rRNA.

Its function is as follows. One of the primary rRNA binding proteins, it binds directly to 16S rRNA where it helps nucleate assembly of the platform of the 30S subunit by binding and bridging several RNA helices of the 16S rRNA. In terms of biological role, forms an intersubunit bridge (bridge B4) with the 23S rRNA of the 50S subunit in the ribosome. The polypeptide is Small ribosomal subunit protein uS15 (Paramagnetospirillum magneticum (strain ATCC 700264 / AMB-1) (Magnetospirillum magneticum)).